The following is a 186-amino-acid chain: Methyl-CpG-binding domain protein 3-like 1 (186 aa).

The segment at 1–104 is transcription repressor; it reads MGKTSQRKQC…TSTDTVASAS (104 aa).

It belongs to the MBD3L family. As to expression, highly expressed in testis. Not detected in the other tissues tested.

The protein localises to the nucleus. Functionally, transcriptional repressor. This Mus musculus (Mouse) protein is Methyl-CpG-binding domain protein 3-like 1 (Mbd3l1).